We begin with the raw amino-acid sequence, 85 residues long: Small ribosomal subunit protein uS17 (85 aa).

This sequence belongs to the universal ribosomal protein uS17 family. As to quaternary structure, part of the 30S ribosomal subunit.

One of the primary rRNA binding proteins, it binds specifically to the 5'-end of 16S ribosomal RNA. The polypeptide is Small ribosomal subunit protein uS17 (Geobacter sulfurreducens (strain ATCC 51573 / DSM 12127 / PCA)).